The sequence spans 175 residues: NADH-ubiquinone oxidoreductase chain 6 (175 aa).

The next 5 membrane-spanning stretches (helical) occupy residues 1-21 (MMTY…VGFS), 27-47 (VYGG…IMNF), 49-69 (GSFL…VVFG), 88-108 (VVFG…LYVL), and 149-169 (YGMW…VVVM).

This sequence belongs to the complex I subunit 6 family. As to quaternary structure, core subunit of respiratory chain NADH dehydrogenase (Complex I) which is composed of 45 different subunits.

It localises to the mitochondrion inner membrane. The catalysed reaction is a ubiquinone + NADH + 5 H(+)(in) = a ubiquinol + NAD(+) + 4 H(+)(out). In terms of biological role, core subunit of the mitochondrial membrane respiratory chain NADH dehydrogenase (Complex I) which catalyzes electron transfer from NADH through the respiratory chain, using ubiquinone as an electron acceptor. Essential for the catalytic activity and assembly of complex I. The protein is NADH-ubiquinone oxidoreductase chain 6 (MT-ND6) of Pteropus scapulatus (Little red flying fox).